A 155-amino-acid polypeptide reads, in one-letter code: FUN14 domain-containing protein 1 (155 aa).

At 1-47 the chain is on the cytoplasmic side; it reads MASRNPPPQDYESDDESYEVLDLTEYARRHHWWNRVFGHSSGPMVEK. 2 positions are modified to phosphoserine: serine 13 and serine 17. The residue at position 18 (tyrosine 18) is a Phosphotyrosine; by SRC. The short motif at 18 to 21 is the YXXL element; it reads YEVL. The helical transmembrane segment at 48–68 threads the bilayer; it reads YSVATQIVMGGVTGWCAGFLF. Topologically, residues 69–74 are mitochondrial intermembrane; the sequence is QKVGKL. The helical transmembrane segment at 75–95 threads the bilayer; the sequence is AATAVGGGFLLLQVASHSGYV. Residues 96 to 133 are Cytoplasmic-facing; the sequence is QIDWKRVEKDVNKAKRQIKKRANKAAPEINNIIEEATD. Lysine 119 participates in a covalent cross-link: Glycyl lysine isopeptide (Lys-Gly) (interchain with G-Cter in ubiquitin). A helical membrane pass occupies residues 134 to 154; sequence FIKQNIVISSGFVGGFLLGLA. Serine 155 is a topological domain (mitochondrial intermembrane).

The protein belongs to the FUN14 family. As to quaternary structure, interacts (via YXXL motif) with MAP1 LC3 family proteins MAP1LC3A, MAP1LC3B and GABARAP. Interacts with DNM1L/DPR1. Interacts with GPX4. In terms of processing, phosphorylation at Ser-13 by CK2 and at Tyr-18 by SRC inhibits activation of mitophagy. Following hypoxia, dephosphorylated at Tyr-18, leading to interaction with MAP1 LC3 family proteins and triggering mitophagy. Dephosphorylation is mediated by PGAM5. Phosphorylated by ULK1 at Ser-17 which enhances FUNDC1 binding to LC3. Ubiquitinated on Lys-119. Deubiquitinated by USP19; leading to hypoxia-induced DRP1 oligomerization and GTPase activity.

Its subcellular location is the mitochondrion outer membrane. Integral mitochondrial outer-membrane protein that mediates the formation of mitochondria-associated endoplasmic reticulum membranes (MAMs). In turn, mediates angiogenesis and neoangiogenesis through interference with intracellular Ca(2+) communication and regulation of the vascular endothelial growth factor receptor KDR/VEGFR2 expression at both mRNA and protein levels. Also acts as an activator of hypoxia-induced mitophagy, an important mechanism for mitochondrial quality and homeostasis, by interacting with and recruiting LC3 protein family to mitochondria. Mechanistically, recruits DRP1 at ER-mitochondria contact sites leading to DRP1 oligomerization and GTPase activity to facilitate mitochondrial fission during hypoxia. Additionally, plays a role in hepatic ferroptosis by interacting directly with glutathione peroxidase/GPX4 to facilitate its recruitment into mitochondria through TOM/TIM complex where it is degraded by mitophagy. The protein is FUN14 domain-containing protein 1 (Fundc1) of Mus musculus (Mouse).